The primary structure comprises 454 residues: tRNA modification GTPase MnmE (454 aa).

The (6S)-5-formyl-5,6,7,8-tetrahydrofolate site is built by Arg-26, Glu-84, and Lys-123. The region spanning 219–378 (GLQVVIAGKP…LVDAITAHAG (160 aa)) is the TrmE-type G domain. Asn-229 serves as a coordination point for K(+). Residues 229–234 (NAGKSS), 248–254 (TDIAGTT), and 273–276 (DTAG) contribute to the GTP site. Ser-233 lines the Mg(2+) pocket. K(+) contacts are provided by Thr-248, Ile-250, and Thr-253. A Mg(2+)-binding site is contributed by Thr-254. Lys-454 provides a ligand contact to (6S)-5-formyl-5,6,7,8-tetrahydrofolate.

The protein belongs to the TRAFAC class TrmE-Era-EngA-EngB-Septin-like GTPase superfamily. TrmE GTPase family. Homodimer. Heterotetramer of two MnmE and two MnmG subunits. The cofactor is K(+).

The protein resides in the cytoplasm. In terms of biological role, exhibits a very high intrinsic GTPase hydrolysis rate. Involved in the addition of a carboxymethylaminomethyl (cmnm) group at the wobble position (U34) of certain tRNAs, forming tRNA-cmnm(5)s(2)U34. This chain is tRNA modification GTPase MnmE, found in Acinetobacter baumannii (strain ATCC 17978 / DSM 105126 / CIP 53.77 / LMG 1025 / NCDC KC755 / 5377).